The primary structure comprises 153 residues: ORM1-like protein 1 (153 aa).

Over 1–26 (MNVGVAHSEVNPNTRVMNSRGMWLTY) the chain is Cytoplasmic. 2 consecutive transmembrane segments (helical) span residues 27-46 (ALGVGMLHIVLLSIPFFSVP) and 47-67 (VAWTLTNVIHNLGMYVFLHAV). Residues 68 to 100 (KGTPFETPDQGKARLLTHWEQLDYGVQFTSSRK) are Cytoplasmic-facing. A helical transmembrane segment spans residues 101–121 (FLTISPIILYFLASFYTKYDP). Topologically, residues 122–123 (TH) are extracellular. A helical membrane pass occupies residues 124–144 (FFINTASLLSVLIPKLPQLHG). Residues 145–153 (VRIFGINKY) are Cytoplasmic-facing.

It belongs to the ORM family. As to quaternary structure, ceramide-sensitive subunit of the serine palmitoyltransferase (SPT) complex, which is also composed of SPTLC1, SPTLC2/3 and SPTSSA/B.

Its subcellular location is the endoplasmic reticulum membrane. Functionally, plays an essential role in the homeostatic regulation of sphingolipid de novo biosynthesis by modulating the activity of the serine palmitoyltransferase (SPT) in response to ceramide levels. When complexed to SPT, the binding of ceramides to its N-terminus stabilizes a conformation that block SPT substrate entry, hence preventing SPT catalytic activity. Through this mechanism, maintains ceramide levels at sufficient concentrations for the production of complex sphingolipids, but which prevents the accumulation of ceramides to levels that trigger apoptosis. This chain is ORM1-like protein 1 (ormdl1), found in Xenopus laevis (African clawed frog).